A 413-amino-acid polypeptide reads, in one-letter code: HVDSGKSTTTGHLIYKCGGIDKRTIEKFEKEAQEMGKGSFKYAWVLDKLKAERERGITIDIALWKFETAKYYVTIIDAPGHRDFIKNMITGTSQADCAVLIVAAGTGEFEAGISKNGQTREHALLAFTLGVKQLIVGVNKMDSTEPPYSESRFEEIKKEVSSYIKKIGYNPAAVAFVPISGWHGDNMLEASTKMPWFKGWNVERKEGKAEGKCLIEALDAILPPARPTDKALRLPLQDVYKIGGIGTVPVGRVETGILKPGTIVVFAPANITTEVKSVEMHHEALQEAVPGDNVGFNVKNVSVKELRRGYVAGDSKNNPPKGAADFTAQVIVLNHPGQISNGYTPVLDCHTAHIACKFAEIKEKVDRRTGKSTEDNPKSIKSGDAAIVNLVPSKPLCVESFQEFPPLGRFAVR.

Residues 1 to 7 (HVDSGKS), 77 to 81 (DAPGH), and 139 to 142 (NKMD) contribute to the GTP site. The tr-type G domain maps to 1–228 (HVDSGKSTTT…DAILPPARPT (228 aa)). 2 positions are modified to 5-glutamyl glycerylphosphorylethanolamine: Glu287 and Glu360.

Belongs to the TRAFAC class translation factor GTPase superfamily. Classic translation factor GTPase family. EF-Tu/EF-1A subfamily.

It is found in the cytoplasm. Functionally, this protein promotes the GTP-dependent binding of aminoacyl-tRNA to the A-site of ribosomes during protein biosynthesis. The polypeptide is Elongation factor 1-alpha (Heliocheilus albipunctella (Millet head miner)).